A 353-amino-acid chain; its full sequence is MMSTLSYTLGQLAAHVGAEVRGDADLPIQGLATLQEAGPAQLSFLANPQYRKYLPESRAGAVLLTAADADGFAGTALVVANPYLAYASLSHLFDRKPKAAAGIHPTAIVAADAEVDPSASVGAYAVIESGARIGAGVSIGAHCVIGARSVIGEGGWLAPRVTLYHDVTIGARVSIQSGAVIGGEGFGFANEKGVWQKIAQIGGVTIGDDVEIGANTTIDRGALSDTLIGNGVKLDNQIMIAHNVQIGDHTAMAACVGISGSAKIGRHCMLAGGVGLVGHIEICDNVFVTGMTMVTRSITEPGSYSSGTAMQPAAEWKKSAARIRQLDDMARRLQQLEKRLAAVTSSGDASSDA.

H242 (proton acceptor) is an active-site residue.

It belongs to the transferase hexapeptide repeat family. LpxD subfamily. Homotrimer.

The enzyme catalyses a UDP-3-O-[(3R)-3-hydroxyacyl]-alpha-D-glucosamine + a (3R)-hydroxyacyl-[ACP] = a UDP-2-N,3-O-bis[(3R)-3-hydroxyacyl]-alpha-D-glucosamine + holo-[ACP] + H(+). Its pathway is bacterial outer membrane biogenesis; LPS lipid A biosynthesis. Its function is as follows. Catalyzes the N-acylation of UDP-3-O-acylglucosamine using 3-hydroxyacyl-ACP as the acyl donor. Is involved in the biosynthesis of lipid A, a phosphorylated glycolipid that anchors the lipopolysaccharide to the outer membrane of the cell. This chain is UDP-3-O-acylglucosamine N-acyltransferase, found in Pseudomonas aeruginosa (strain LESB58).